The chain runs to 437 residues: Phosphomethylpyrimidine synthase (437 aa).

Residues N69, M98, Y127, H163, S185 to G187, D226 to R229, and E265 contribute to the substrate site. H269 is a binding site for Zn(2+). A substrate-binding site is contributed by Y292. H333 lines the Zn(2+) pocket. [4Fe-4S] cluster-binding residues include C409, C412, and C416.

The protein belongs to the ThiC family. It depends on [4Fe-4S] cluster as a cofactor.

It carries out the reaction 5-amino-1-(5-phospho-beta-D-ribosyl)imidazole + S-adenosyl-L-methionine = 4-amino-2-methyl-5-(phosphooxymethyl)pyrimidine + CO + 5'-deoxyadenosine + formate + L-methionine + 3 H(+). The protein operates within cofactor biosynthesis; thiamine diphosphate biosynthesis. Its function is as follows. Catalyzes the synthesis of the hydroxymethylpyrimidine phosphate (HMP-P) moiety of thiamine from aminoimidazole ribotide (AIR) in a radical S-adenosyl-L-methionine (SAM)-dependent reaction. This is Phosphomethylpyrimidine synthase from Clostridium botulinum (strain Kyoto / Type A2).